The primary structure comprises 469 residues: Glutamate--tRNA ligase (469 aa).

A 'HIGH' region motif is present at residues 9–19 (PSPTGFLHVGG). The 'KMSKS' region signature appears at 236 to 240 (KLSKR). Lys-239 is a binding site for ATP.

The protein belongs to the class-I aminoacyl-tRNA synthetase family. Glutamate--tRNA ligase type 1 subfamily. As to quaternary structure, monomer.

The protein localises to the cytoplasm. It catalyses the reaction tRNA(Glu) + L-glutamate + ATP = L-glutamyl-tRNA(Glu) + AMP + diphosphate. Its function is as follows. Catalyzes the attachment of glutamate to tRNA(Glu) in a two-step reaction: glutamate is first activated by ATP to form Glu-AMP and then transferred to the acceptor end of tRNA(Glu). In Shewanella amazonensis (strain ATCC BAA-1098 / SB2B), this protein is Glutamate--tRNA ligase.